We begin with the raw amino-acid sequence, 978 residues long: Receptor like protein 21 (978 aa).

The N-terminal stretch at 1–27 (MLLAMEGKLFLCQYLIWVMLLLGQLHG) is a signal peptide. Topologically, residues 28 to 930 (CTSCIEKERE…EEDDKAAIDM (903 aa)) are extracellular. Residues Asn64, Asn79, Asn102, Asn116, and Asn155 are each glycosylated (N-linked (GlcNAc...) asparagine). LRR repeat units follow at residues 141–167 (LRNLKIMDLSTNYFNYSTFPFLNAATS), 169–189 (TTLILTYNEMDGPFPIKGLKD), 190–213 (LTNLELLDLRANKLNGSMQELIHL), 214–237 (KKLKALDLSSNKFSSSMELQELQN), 238–262 (LINLEVLGLAQNHVDGPIPIEVFCK), 264–287 (KNLRDLDLKGNHFVGQIPLCLGSL), 288–310 (KKLRVLDLSSNQLSGDLPSSFSS), 312–335 (ESLEYLSLSDNNFDGSFSLNPLTN), 337–361 (TNLKLFKLSSRSHTIQVKMESTWQP), 362–385 (NFQLSVVVLRFCSLEKIPSFLLYQ), 386–409 (KKLRLVDLSSNNLSGNIPTWLLTN), 410–432 (NPELEVLQLQNNSFTIFPIPTMV), 433–455 (HNLQIFDFSANNIGKFPDKMDHA), 457–480 (PNLVRLNGSNNGFQGYFPTSIGEM), 481–504 (KNISFLDLSYNNFSGKLPRSFVTG), 506–529 (VSIMFLKLSHNKFSGRFLPRETNF), 530–553 (PSLDVLRMDNNLFTGNIGGGLSNS), 554–577 (TMLRILDMSNNGLSGAIPRWLFEF), 579–601 (YLDYVLISNNFLEGTIPPSLLGM), 602–625 (PFLSFLDLSGNQFSGALPSHVDSE), 627–646 (GIYMFLHNNNFTGPIPDTLL), 647–671 (KSVQILDLRNNKLSGSIPQFDDTQS), 673–693 (NILLLKGNNLTGSIPRELCDL), 694–716 (SNVRLLDLSDNKLNGVIPSCLSN), 788–811 (LRLMYGMDLSNNELSGVIPTELGD), 812–835 (LLKLRTLNLSHNSLLGSIPSSFSK), 837–859 (IDVESLDLSHNMLQGSIPQLLSS), and 860–885 (LTSLAVFDVSSNNLSGIIPQGRQFNT). A glycan (N-linked (GlcNAc...) asparagine) is linked at Asn204. The N-linked (GlcNAc...) asparagine glycan is linked to Asn335. Residues Asn397 and Asn420 are each glycosylated (N-linked (GlcNAc...) asparagine). N-linked (GlcNAc...) asparagine glycans are attached at residues Asn463, Asn482, and Asn492. Asn552 carries N-linked (GlcNAc...) asparagine glycosylation. Asn636 carries N-linked (GlcNAc...) asparagine glycosylation. N-linked (GlcNAc...) asparagine glycosylation is found at Asn681 and Asn716. Asn819 is a glycosylation site (N-linked (GlcNAc...) asparagine). N-linked (GlcNAc...) asparagine glycosylation occurs at Asn872. The tract at residues 902–922 (TSRSCETNKSPEEADNGQEEE) is disordered. Residues 931-951 (MVFYFSTASIYVTALIGVLVL) traverse the membrane as a helical segment. The Cytoplasmic segment spans residues 952-978 (MCFDCPWRRAWLRIVDAFIASAKHVLP).

It belongs to the RLP family.

The protein resides in the cell membrane. In Arabidopsis thaliana (Mouse-ear cress), this protein is Receptor like protein 21.